A 216-amino-acid chain; its full sequence is Sarcospan (216 aa).

At 1-26 (MGRKPSPRAQELPEEEARTCCGCRFP) the chain is on the cytoplasmic side. The chain crosses the membrane as a helical span at residues 27–47 (LLLALLQLALGIAVTVLGFLM). Residues 48–59 (ASISPSLLVRDT) lie on the Extracellular side of the membrane. Residues 60–80 (PFWAGSIVCVVAYLGLFMLCV) traverse the membrane as a helical segment. Residues 81 to 95 (SYQVDERTCVQFSMK) lie on the Cytoplasmic side of the membrane. A helical transmembrane segment spans residues 96 to 116 (VFYFLLSALGLMVCMLAVAFA). At 117-166 (AHHYSLLAQFTCETSLDSCQCKLPSSEPLSRAFVYRDVTDCTSVTGTFKL) the chain is on the extracellular side. A helical transmembrane segment spans residues 167–187 (FLIIQMVLNLVCGLVCLLACF). At 188 to 216 (VMWKHRYQVFYVGVGLRSLMASDGQLPKA) the chain is on the cytoplasmic side.

The protein localises to the cell membrane. It is found in the sarcolemma. It localises to the postsynaptic cell membrane. In terms of biological role, component of the dystrophin-glycoprotein complex (DGC), a complex that spans the muscle plasma membrane and forms a link between the F-actin cytoskeleton and the extracellular matrix. Preferentially associates with the sarcoglycan subcomplex of the DGC. The chain is Sarcospan (Sspn) from Mus musculus (Mouse).